A 220-amino-acid chain; its full sequence is MKAVVILSGGMDSSITAYMAKKDGYEIIAVHFNYGQRTEQKELEAFRAIAGELNAKTYEIDLPFFEQIGASALIDTNIAIPKQGIEPGIPVTYVPFRNGIFLSVAAAIAEKEGADSIYIGVVEEDSSGYPDCREDFIQKMESAINAGTKPETDIKIKTPLIHLRKEDIVQLGLSLGVPLEKTWSCYESEDEACGECDSCRLRLKGFEKAGAKDKIPYKST.

ATP is bound at residue 7–17 (LSGGMDSSITA). Residues Cys185, Cys193, Cys196, and Cys199 each coordinate Zn(2+).

Belongs to the QueC family. It depends on Zn(2+) as a cofactor.

The enzyme catalyses 7-carboxy-7-deazaguanine + NH4(+) + ATP = 7-cyano-7-deazaguanine + ADP + phosphate + H2O + H(+). The protein operates within purine metabolism; 7-cyano-7-deazaguanine biosynthesis. Its function is as follows. Catalyzes the ATP-dependent conversion of 7-carboxy-7-deazaguanine (CDG) to 7-cyano-7-deazaguanine (preQ(0)). The chain is 7-cyano-7-deazaguanine synthase from Nitratiruptor sp. (strain SB155-2).